A 301-amino-acid polypeptide reads, in one-letter code: Phosphatidylglycerol--prolipoprotein diacylglyceryl transferase (301 aa).

A run of 3 helical transmembrane segments spans residues 17 to 37, 59 to 79, and 97 to 117; these read LAVR…IVVG, MLFY…VLFY, and GGMS…LFAY. R142 serves as a coordination point for a 1,2-diacyl-sn-glycero-3-phospho-(1'-sn-glycerol). 2 helical membrane passes run 230–250 and 265–285; these read MGAI…TVEF and LSMG…LLVW.

This sequence belongs to the Lgt family.

It is found in the cell inner membrane. It carries out the reaction L-cysteinyl-[prolipoprotein] + a 1,2-diacyl-sn-glycero-3-phospho-(1'-sn-glycerol) = an S-1,2-diacyl-sn-glyceryl-L-cysteinyl-[prolipoprotein] + sn-glycerol 1-phosphate + H(+). Its pathway is protein modification; lipoprotein biosynthesis (diacylglyceryl transfer). Functionally, catalyzes the transfer of the diacylglyceryl group from phosphatidylglycerol to the sulfhydryl group of the N-terminal cysteine of a prolipoprotein, the first step in the formation of mature lipoproteins. The polypeptide is Phosphatidylglycerol--prolipoprotein diacylglyceryl transferase (Paraburkholderia xenovorans (strain LB400)).